Reading from the N-terminus, the 616-residue chain is ATP-dependent zinc metalloprotease FtsH 3 (616 aa).

Residues 1–9 (MSKNNKKWR) lie on the Cytoplasmic side of the membrane. A helical transmembrane segment spans residues 10–30 (NAGLYALLLIVVLALASAFFD). Over 31-108 (RPTQTRETLS…VQPQSDEGFW (78 aa)) the chain is Lumenal. A helical membrane pass occupies residues 109-129 (FRIASTLFLPILLLVGIFFLF). The Cytoplasmic segment spans residues 130-616 (RRAQSGPGSQ…NNNAKLALLV (487 aa)). 201-208 (GPPGTGKT) provides a ligand contact to ATP. H423 lines the Zn(2+) pocket. The active site involves E424. Zn(2+) contacts are provided by H427 and D504.

This sequence in the central section; belongs to the AAA ATPase family. It in the C-terminal section; belongs to the peptidase M41 family. As to quaternary structure, homohexamer (Potential). Part of a large complex that includes FtsH2 and PSII. Coimmunoprecipitates with YidC. Zn(2+) serves as cofactor.

The protein localises to the cellular thylakoid membrane. Functionally, acts as a processive, ATP-dependent zinc metallopeptidase for both cytoplasmic and membrane proteins. Plays a role in the quality control of integral membrane proteins. The sequence is that of ATP-dependent zinc metalloprotease FtsH 3 from Synechocystis sp. (strain ATCC 27184 / PCC 6803 / Kazusa).